The sequence spans 404 residues: Iron-sulfur assembly protein IscA2 (404 aa).

Residues 244 to 289 (KEEDEKKLDKLLKKRNIKKRDIVTITEEAKEELKKIISINKKENNN) are a coiled coil.

Belongs to the HesB/IscA family. Dimer. Homotetramer. Interacts with ABCB6.

It localises to the mitochondrion. The protein operates within cofactor biosynthesis; iron-sulfur cluster biosynthesis. Participates in iron-sulfur cluster formation (ISC) pathway for iron-sulfur (Fe-S) cluster biogenesis. Can bind and transfer [4Fe-4S] clusters to target apo-proteins. This Plasmodium falciparum (isolate 3D7) protein is Iron-sulfur assembly protein IscA2.